The following is a 431-amino-acid chain: Tol-Pal system protein TolB (431 aa).

The first 26 residues, 1–26 (MSLMTKLGFRALVASCLITAGSAANA), serve as a signal peptide directing secretion. The tract at residues 406–431 (DGSAPPQILSVQGGSVREPSWGPFMQ) is disordered.

The protein belongs to the TolB family. In terms of assembly, the Tol-Pal system is composed of five core proteins: the inner membrane proteins TolA, TolQ and TolR, the periplasmic protein TolB and the outer membrane protein Pal. They form a network linking the inner and outer membranes and the peptidoglycan layer.

The protein resides in the periplasm. Part of the Tol-Pal system, which plays a role in outer membrane invagination during cell division and is important for maintaining outer membrane integrity. This is Tol-Pal system protein TolB from Burkholderia cenocepacia (strain ATCC BAA-245 / DSM 16553 / LMG 16656 / NCTC 13227 / J2315 / CF5610) (Burkholderia cepacia (strain J2315)).